A 116-amino-acid polypeptide reads, in one-letter code: Phosphoribosyl-AMP cyclohydrolase (116 aa).

D81 contributes to the Mg(2+) binding site. Residue C82 participates in Zn(2+) binding. Mg(2+) is bound by residues D83 and D85. Zn(2+) is bound by residues C98 and C105.

The protein belongs to the PRA-CH family. In terms of assembly, homodimer. Mg(2+) is required as a cofactor. It depends on Zn(2+) as a cofactor.

Its subcellular location is the cytoplasm. The catalysed reaction is 1-(5-phospho-beta-D-ribosyl)-5'-AMP + H2O = 1-(5-phospho-beta-D-ribosyl)-5-[(5-phospho-beta-D-ribosylamino)methylideneamino]imidazole-4-carboxamide. It functions in the pathway amino-acid biosynthesis; L-histidine biosynthesis; L-histidine from 5-phospho-alpha-D-ribose 1-diphosphate: step 3/9. Functionally, catalyzes the hydrolysis of the adenine ring of phosphoribosyl-AMP. In Mycolicibacterium vanbaalenii (strain DSM 7251 / JCM 13017 / BCRC 16820 / KCTC 9966 / NRRL B-24157 / PYR-1) (Mycobacterium vanbaalenii), this protein is Phosphoribosyl-AMP cyclohydrolase.